The sequence spans 604 residues: Putative O-acetyltransferase SAR0937 (604 aa).

11 consecutive transmembrane segments (helical) span residues 15-35 (YMPG…IYHL), 43-63 (GFLG…SLLL), 85-105 (LLPA…LLKS), 150-170 (AIEE…LLTI), 176-196 (IGFI…FIYS), 212-232 (LQTL…KLKN), 240-260 (YVID…FFII), 267-287 (IYDG…ASVV), 310-330 (YSLY…YVDG), 332-352 (IPVY…ELSY), and 377-397 (FIRM…LVGA). Residues Ser459, Asp581, and His584 contribute to the active site.

The protein belongs to the acyltransferase 3 family.

The protein localises to the cell membrane. The polypeptide is Putative O-acetyltransferase SAR0937 (Staphylococcus aureus (strain MRSA252)).